The following is a 145-amino-acid chain: Large ribosomal subunit protein uL16 (145 aa).

This sequence belongs to the universal ribosomal protein uL16 family. Part of the 50S ribosomal subunit.

Binds 23S rRNA and is also seen to make contacts with the A and possibly P site tRNAs. The chain is Large ribosomal subunit protein uL16 from Lactobacillus gasseri (strain ATCC 33323 / DSM 20243 / BCRC 14619 / CIP 102991 / JCM 1131 / KCTC 3163 / NCIMB 11718 / NCTC 13722 / AM63).